The sequence spans 523 residues: MSTRLHRRVALITLGCSRNEVDSEELAARLGADGWELVSDAADADAVLVNTCGFVDAAKKDSIDALLAADGLRAGGGPSGPADGAGPGPRAVVAVGCLAERYGTELAESLPEADAVLGFDAYPNIATHLAAVLAGTPVPAHSPRDRRTMLPITPVDRAAPALPPAAVSTGAVPLRRRLTAGPVAVLKISSGCDRRCAFCAIPSFRGSHVSRSPDDVLAEAEWLAGQGARELVLVSENSTSYGKDLGDLRALEKLLPQLAAVSGIVRVRTVYLQPAEMRPSLLEVLLTTPGLAPYLDLSFQHASPPVLRRMRRFGGSGHFLDLLARARALAPELGARSNVIVGFPGETPEDVDILAEFLEAAELDAVGVFGYSDEEGTEAAGLTDKIPDELIERRRVRVTDLVEQLTAARADARIGSRVQVLVEEVAGGLATGCAAHQQAEVDGGCVVRLSPGGAADDGPERLGVGDLVGVGDLVEARVVATEGVDLIAEFIAVLDRARPTAAVARPTPDRAAALVGRGVADGT.

The MTTase N-terminal domain occupies 7–134; it reads RRVALITLGC…IATHLAAVLA (128 aa). [4Fe-4S] cluster-binding residues include C16, C52, C97, C192, C196, and C199. A Radical SAM core domain is found at 178 to 409; it reads LTAGPVAVLK…DLVEQLTAAR (232 aa). Residues 411-492 enclose the TRAM domain; it reads DARIGSRVQV…GVDLIAEFIA (82 aa).

This sequence belongs to the methylthiotransferase family. RimO subfamily. It depends on [4Fe-4S] cluster as a cofactor.

The protein localises to the cytoplasm. It catalyses the reaction L-aspartate(89)-[ribosomal protein uS12]-hydrogen + (sulfur carrier)-SH + AH2 + 2 S-adenosyl-L-methionine = 3-methylsulfanyl-L-aspartate(89)-[ribosomal protein uS12]-hydrogen + (sulfur carrier)-H + 5'-deoxyadenosine + L-methionine + A + S-adenosyl-L-homocysteine + 2 H(+). In terms of biological role, catalyzes the methylthiolation of an aspartic acid residue of ribosomal protein uS12. This is Ribosomal protein uS12 methylthiotransferase RimO from Frankia casuarinae (strain DSM 45818 / CECT 9043 / HFP020203 / CcI3).